Here is a 675-residue protein sequence, read N- to C-terminus: MRVLSARFRVLLACLALVIPVSETNFLSKERASQVLVRKRRANTLFEETMKGNLERECIEELCNKEEAREVFENNPETDYFYPKYLGCLGAFRVGSFHAARQSANAYPDLRSCVKAISDQCDPIPCNEDGYLACQDGQAAFTCFCKPGWQGDRCQYDVNECKDPSNVNGGCSQICDNTPGSYHCSCKRGFAMLPNKKDCKDLDECALKPSVCGTAVCKNIPGDFECECPDGYRYDPSSKSCKDVDECSENMCAQLCVNFPGGYSCYCDGKKGFKLAQDQKSCEGIPVCLSLDLDKNYELLYLAEQFAGVVLYLKFRLPDITRFSAEFDFRTYDSEGIILYAESLDHSNWLLIALRDGKIEVQFKNEFSTQITTGGNVINNGIWNMVSVEELDDSVSIKIAKEAVMNINKLGSLFKPTDGFLDTKIYFAGLPRKVESALIKPINPRLDGCIRGWNLMKQGALGAKEIIEGKQNKHCFLNVEKGSYYPGSGIAQFSIDYNNVTNAEGWQMNVTLNIRPSTGTGVMLALVSGGTVPFALSLVDSRSGTSQDIVVFVENSVVARLEAVSLCSDQQSQLKCNVNRNGLELWTPLRKDVIYSKDLQRQLAVLDKAMKRTVATYLGGIPDISFSATPVNAFYSGCMEVNINGVQLDLDEAISKHKDIRAHSCPSVRKIQKNF.

A signal peptide spans M1 to T24. The propeptide occupies N25–R41. The region spanning A42–G87 is the Gla domain. E47, E48, E55, E57, E60, E61, E66, E67, E70, E73, and E77 each carry 4-carboxyglutamate. Cysteines 58 and 63 form a disulfide. The interval C88–A116 is thrombin-sensitive. In terms of domain architecture, EGF-like 1 spans I117–Q155. Cystine bridges form between C121/C134, C126/C143, C145/C154, C161/C175, C171/C184, C186/C199, C205/C217, C212/C226, C228/C241, C247/C256, C252/C265, C267/C282, and C449/C475. Residue D136 is modified to (3R)-3-hydroxyaspartate. An EGF-like 2; calcium-binding domain is found at D157 to K200. The 42-residue stretch at D201–K242 folds into the EGF-like 3; calcium-binding domain. The EGF-like 4; calcium-binding domain maps to D243–E283. Laminin G-like domains are found at residues L299–C475 and Y484–C665. Residues N499 and N509 are each glycosylated (N-linked (GlcNAc...) asparagine). C638 and C665 are disulfide-bonded.

The iron and 2-oxoglutarate dependent 3-hydroxylation of aspartate and asparagine is (R) stereospecific within EGF domains. As to expression, plasma.

Its subcellular location is the secreted. In terms of biological role, anticoagulant plasma protein; it is a cofactor to activated protein C in the degradation of coagulation factors Va and VIIIa. It helps to prevent coagulation and stimulating fibrinolysis. This Mus musculus (Mouse) protein is Vitamin K-dependent protein S (Pros1).